The primary structure comprises 260 residues: Endonuclease NucS (260 aa).

Belongs to the NucS endonuclease family.

It localises to the cytoplasm. In terms of biological role, cleaves both 3' and 5' ssDNA extremities of branched DNA structures. This chain is Endonuclease NucS, found in Methanopyrus kandleri (strain AV19 / DSM 6324 / JCM 9639 / NBRC 100938).